A 402-amino-acid chain; its full sequence is S-adenosylmethionine synthase (402 aa).

ATP is bound at residue histidine 15. Mg(2+) is bound at residue aspartate 17. A K(+)-binding site is contributed by glutamate 43. Residues glutamate 56 and glutamine 99 each coordinate L-methionine. Residues 99–109 form a flexible loop region; that stretch reads QSPDIAQGVDT. Residues 174-176, 247-248, aspartate 256, 262-263, alanine 279, and lysine 283 contribute to the ATP site; these read DGK, RF, and RK. L-methionine is bound at residue aspartate 256. Lysine 287 serves as a coordination point for L-methionine.

It belongs to the AdoMet synthase family. Homotetramer; dimer of dimers. The cofactor is Mg(2+). Requires K(+) as cofactor.

It is found in the cytoplasm. The enzyme catalyses L-methionine + ATP + H2O = S-adenosyl-L-methionine + phosphate + diphosphate. The protein operates within amino-acid biosynthesis; S-adenosyl-L-methionine biosynthesis; S-adenosyl-L-methionine from L-methionine: step 1/1. Catalyzes the formation of S-adenosylmethionine (AdoMet) from methionine and ATP. The overall synthetic reaction is composed of two sequential steps, AdoMet formation and the subsequent tripolyphosphate hydrolysis which occurs prior to release of AdoMet from the enzyme. In Streptomyces coelicolor (strain ATCC BAA-471 / A3(2) / M145), this protein is S-adenosylmethionine synthase.